Reading from the N-terminus, the 644-residue chain is ATP-dependent zinc metalloprotease FtsH (644 aa).

The Cytoplasmic segment spans residues 1 to 4; the sequence is MAKN. A helical transmembrane segment spans residues 5-25; the sequence is LILWLVIAVVLMSVFQSFGPS. Residues 26–98 lie on the Periplasmic side of the membrane; sequence ESNGRKVDYS…VGEPPEEPSL (73 aa). Residues 99–119 form a helical membrane-spanning segment; the sequence is LASIFISWFPMLLLIGVWIFF. The Cytoplasmic segment spans residues 120–644; the sequence is MRQMQGGGGK…NTMSEQLGDK (525 aa). 192–199 contributes to the ATP binding site; sequence GPPGTGKT. Residue His414 coordinates Zn(2+). Glu415 is an active-site residue. Zn(2+) is bound by residues His418 and Asp492. A disordered region spans residues 598 to 644; that stretch reads VRPPAGWEEPGASNNSGDNGSPKAPRPVDEPRTPNPGNTMSEQLGDK. A compositionally biased stretch (polar residues) spans 632 to 644; that stretch reads NPGNTMSEQLGDK.

The protein in the central section; belongs to the AAA ATPase family. In the C-terminal section; belongs to the peptidase M41 family. In terms of assembly, homohexamer. The cofactor is Zn(2+).

The protein localises to the cell inner membrane. Acts as a processive, ATP-dependent zinc metallopeptidase for both cytoplasmic and membrane proteins. Plays a role in the quality control of integral membrane proteins. This chain is ATP-dependent zinc metalloprotease FtsH, found in Shigella flexneri.